The primary structure comprises 597 residues: Probable tyrosine-protein phosphatase (597 aa).

Residues 55-81 are compositionally biased toward low complexity; sequence VSSSSDAAPTSISTTTTSTTSMTDASA. Disordered regions lie at residues 55-89, 107-172, and 188-228; these read VSSS…QQVY, SFSI…PNSL, and STNG…GNNN. Positions 107–126 are enriched in polar residues; the sequence is SFSIQPNQTPTMLPTSSYTL. The segment covering 136–151 has biased composition (low complexity); the sequence is TSSISSISSTSSNSTS. Composition is skewed to polar residues over residues 188-206 and 216-228; these read STNG…NQPR and KKST…GNNN. The region spanning 428–579 is the Tyrosine-protein phosphatase domain; sequence GPKNVLNNLI…LMEFGDKLNN (152 aa). C516 (phosphocysteine intermediate) is an active-site residue.

This sequence belongs to the protein-tyrosine phosphatase family. Non-receptor class dual specificity subfamily.

The catalysed reaction is O-phospho-L-tyrosyl-[protein] + H2O = L-tyrosyl-[protein] + phosphate. The protein is Probable tyrosine-protein phosphatase (CPP1) of Candida albicans (strain WO-1) (Yeast).